The chain runs to 443 residues: ATP-dependent protease ATPase subunit HslU (443 aa).

ATP-binding positions include isoleucine 18, 60–65 (GVGKTE), aspartate 256, glutamate 321, and arginine 393.

It belongs to the ClpX chaperone family. HslU subfamily. In terms of assembly, a double ring-shaped homohexamer of HslV is capped on each side by a ring-shaped HslU homohexamer. The assembly of the HslU/HslV complex is dependent on binding of ATP.

Its subcellular location is the cytoplasm. In terms of biological role, ATPase subunit of a proteasome-like degradation complex; this subunit has chaperone activity. The binding of ATP and its subsequent hydrolysis by HslU are essential for unfolding of protein substrates subsequently hydrolyzed by HslV. HslU recognizes the N-terminal part of its protein substrates and unfolds these before they are guided to HslV for hydrolysis. The chain is ATP-dependent protease ATPase subunit HslU from Vibrio parahaemolyticus serotype O3:K6 (strain RIMD 2210633).